Consider the following 203-residue polypeptide: Superoxide dismutase [Mn] (203 aa).

The Mn(2+) site is built by His-27, His-81, Asp-164, and His-168.

It belongs to the iron/manganese superoxide dismutase family. In terms of assembly, homodimer. The cofactor is Mn(2+).

It carries out the reaction 2 superoxide + 2 H(+) = H2O2 + O2. Destroys superoxide anion radicals which are normally produced within the cells and which are toxic to biological systems. Partially complements double sodA-sodB deletions in E.coli. This chain is Superoxide dismutase [Mn], found in Pseudomonas aeruginosa (strain ATCC 15692 / DSM 22644 / CIP 104116 / JCM 14847 / LMG 12228 / 1C / PRS 101 / PAO1).